A 451-amino-acid polypeptide reads, in one-letter code: Macrophage scavenger receptor types I and II (451 aa).

The Cytoplasmic portion of the chain corresponds to methionine 1–lysine 50. Serine 27 is modified (phosphoserine). The helical; Signal-anchor for type II membrane protein transmembrane segment at alanine 51 to leucine 76 threads the bilayer. Residues lysine 77 to arginine 109 are spacer. At lysine 77–leucine 451 the chain is on the extracellular side. Residues asparagine 82, asparagine 102, asparagine 143, asparagine 184, asparagine 221, asparagine 249, and asparagine 267 are each glycosylated (N-linked (GlcNAc...) asparagine). A coiled-coil region spans residues asparagine 171–arginine 255. A disordered region spans residues asparagine 267–proline 346. A Collagen-like domain is found at glycine 273 to glycine 341. The SRCR domain maps to valine 350 to threonine 450. Intrachain disulfides connect cysteine 375–cysteine 439, cysteine 388–cysteine 449, and cysteine 419–cysteine 429.

In terms of assembly, homotrimer. Interacts with MYO18A. Isoform I, isoform II and isoform III are expressed in monocyte-derived macrophages. Isoform I and isoform II are expressed in the liver, placenta and brain.

Its subcellular location is the membrane. Functionally, membrane glycoproteins implicated in the pathologic deposition of cholesterol in arterial walls during atherogenesis. Two types of receptor subunits exist. These receptors mediate the endocytosis of a diverse group of macromolecules, including modified low density lipoproteins (LDL). Isoform III does not internalize acetylated LDL. The chain is Macrophage scavenger receptor types I and II (MSR1) from Homo sapiens (Human).